A 130-amino-acid polypeptide reads, in one-letter code: Phosphoribosyl-AMP cyclohydrolase (130 aa).

Asp-77 is a Mg(2+) binding site. Cys-78 is a Zn(2+) binding site. Mg(2+) is bound by residues Asp-79 and Asp-81. Residues Cys-95 and Cys-102 each contribute to the Zn(2+) site.

This sequence belongs to the PRA-CH family. In terms of assembly, homodimer. The cofactor is Mg(2+). Zn(2+) is required as a cofactor.

It localises to the cytoplasm. The catalysed reaction is 1-(5-phospho-beta-D-ribosyl)-5'-AMP + H2O = 1-(5-phospho-beta-D-ribosyl)-5-[(5-phospho-beta-D-ribosylamino)methylideneamino]imidazole-4-carboxamide. Its pathway is amino-acid biosynthesis; L-histidine biosynthesis; L-histidine from 5-phospho-alpha-D-ribose 1-diphosphate: step 3/9. In terms of biological role, catalyzes the hydrolysis of the adenine ring of phosphoribosyl-AMP. This Pseudomonas syringae pv. tomato (strain ATCC BAA-871 / DC3000) protein is Phosphoribosyl-AMP cyclohydrolase.